Here is a 260-residue protein sequence, read N- to C-terminus: Acyl-coenzyme A diphosphatase FITM2 (260 aa).

Over M1–H23 the chain is Cytoplasmic. A helical membrane pass occupies residues C24–L44. The Lumenal portion of the chain corresponds to P45–N57. A helical membrane pass occupies residues V58–L78. The Cytoplasmic portion of the chain corresponds to T79–R93. A helical membrane pass occupies residues L94–I114. Over E115–G144 the chain is Lumenal. A helical membrane pass occupies residues F145–I165. The active site involves H154. The Cytoplasmic segment spans residues L166–Q189. 2 consecutive transmembrane segments (helical) span residues F190–Y210 and F211–T231. H212 is an active-site residue. Residues Y232–N260 lie on the Cytoplasmic side of the membrane.

It belongs to the FIT family. FIT2 subfamily.

It is found in the endoplasmic reticulum membrane. It catalyses the reaction an acyl-CoA + H2O = an acyl-4'-phosphopantetheine + adenosine 3',5'-bisphosphate + 2 H(+). Its function is as follows. Fatty acyl-coenzyme A (CoA) diphosphatase that hydrolyzes fatty acyl-CoA to yield acyl-4'-phosphopantetheine and adenosine 3',5'-bisphosphate. Preferentially hydrolyzes unsaturated long-chain acyl-CoA substrates in the endoplasmic reticulum (ER) lumen. This catalytic activity is required for maintaining ER structure and for lipid droplets (LDs) biogenesis, which are lipid storage organelles involved in maintaining lipid and energy homeostasis. May directly bind to diacylglycerol (DAGs) and triacylglycerol, which is also important for LD biogenesis. May support directional budding of nacent LDs from the ER into the cytosol by reducing DAG levels at sites of LD formation. May play a role in the regulation of cell morphology, ER morphology and cytoskeletal organization. This is Acyl-coenzyme A diphosphatase FITM2 from Xenopus laevis (African clawed frog).